Consider the following 122-residue polypeptide: Ribonuclease pancreatic (122 aa).

2 residues coordinate substrate: lysine 6 and arginine 9. Histidine 11 acts as the Proton acceptor in catalysis. 4 disulfides stabilise this stretch: cysteine 25/cysteine 83, cysteine 39/cysteine 94, cysteine 57/cysteine 109, and cysteine 64/cysteine 71. Substrate is bound by residues 40–44 (KPVNT), lysine 65, and arginine 84. Catalysis depends on histidine 117, which acts as the Proton donor.

Belongs to the pancreatic ribonuclease family. Monomer. Interacts with and forms tight 1:1 complexes with RNH1. Dimerization of two such complexes may occur. Interaction with RNH1 inhibits this protein. In terms of tissue distribution, pancreas.

The protein localises to the secreted. The catalysed reaction is an [RNA] containing cytidine + H2O = an [RNA]-3'-cytidine-3'-phosphate + a 5'-hydroxy-ribonucleotide-3'-[RNA].. The enzyme catalyses an [RNA] containing uridine + H2O = an [RNA]-3'-uridine-3'-phosphate + a 5'-hydroxy-ribonucleotide-3'-[RNA].. Its function is as follows. Endonuclease that catalyzes the cleavage of RNA on the 3' side of pyrimidine nucleotides. Acts on single-stranded and double-stranded RNA. This chain is Ribonuclease pancreatic, found in Notamacropus rufogriseus (Red-necked wallaby).